Consider the following 310-residue polypeptide: MTALPQDTDWTADASRPAQARIEREAHKLEKRLCREVGRAIVDYRMIEEGDKVMVCMSGGKDSYTLLDILIKLQKRAPIHFDLVAVNLDQKQPGFPEHILPEYLAATGVPFHIENQDTYSIVKRVVPEGKTTCGLCSRLRRGILYRVADELGCTKIALGHHRDDILQTLLLNMFFGGKMKAMPPKLVSDDGRHVVIRPLAYVPEKDTTRWAQQRQFPIIPCNLCGSQENLQRKQVGEMLRDWDKRFPGRVDNMFNALQNIVPSHLMDGTLHDFQHLKATGIASDDGDKAFDAEEFPPAPALPGLQVVQIS.

Positions Ser-58–Ser-63 match the PP-loop motif motif. Positions 133, 136, and 224 each coordinate [4Fe-4S] cluster.

This sequence belongs to the TtcA family. Homodimer. Mg(2+) is required as a cofactor. Requires [4Fe-4S] cluster as cofactor.

The protein resides in the cytoplasm. The catalysed reaction is cytidine(32) in tRNA + S-sulfanyl-L-cysteinyl-[cysteine desulfurase] + AH2 + ATP = 2-thiocytidine(32) in tRNA + L-cysteinyl-[cysteine desulfurase] + A + AMP + diphosphate + H(+). The protein operates within tRNA modification. Catalyzes the ATP-dependent 2-thiolation of cytidine in position 32 of tRNA, to form 2-thiocytidine (s(2)C32). The sulfur atoms are provided by the cysteine/cysteine desulfurase (IscS) system. The chain is tRNA-cytidine(32) 2-sulfurtransferase from Paracidovorax citrulli (strain AAC00-1) (Acidovorax citrulli).